The chain runs to 398 residues: Acetate kinase (398 aa).

Asn-7 is a binding site for Mg(2+). Lys-14 is an ATP binding site. Arg-91 contributes to the substrate binding site. Asp-148 (proton donor/acceptor) is an active-site residue. ATP contacts are provided by residues 208-212 (HLGNG), 282-284 (DFR), and 330-334 (GVGEN). Glu-383 contacts Mg(2+).

Belongs to the acetokinase family. In terms of assembly, homodimer. Mg(2+) serves as cofactor. The cofactor is Mn(2+).

The protein localises to the cytoplasm. The catalysed reaction is acetate + ATP = acetyl phosphate + ADP. The protein operates within metabolic intermediate biosynthesis; acetyl-CoA biosynthesis; acetyl-CoA from acetate: step 1/2. Catalyzes the formation of acetyl phosphate from acetate and ATP. Can also catalyze the reverse reaction. The chain is Acetate kinase from Carboxydothermus hydrogenoformans (strain ATCC BAA-161 / DSM 6008 / Z-2901).